The following is a 398-amino-acid chain: Tryptophan synthase beta chain (398 aa).

Lysine 90 carries the N6-(pyridoxal phosphate)lysine modification.

This sequence belongs to the TrpB family. As to quaternary structure, tetramer of two alpha and two beta chains. Pyridoxal 5'-phosphate is required as a cofactor.

It catalyses the reaction (1S,2R)-1-C-(indol-3-yl)glycerol 3-phosphate + L-serine = D-glyceraldehyde 3-phosphate + L-tryptophan + H2O. The protein operates within amino-acid biosynthesis; L-tryptophan biosynthesis; L-tryptophan from chorismate: step 5/5. The beta subunit is responsible for the synthesis of L-tryptophan from indole and L-serine. In Anoxybacillus flavithermus (strain DSM 21510 / WK1), this protein is Tryptophan synthase beta chain.